A 93-amino-acid chain; its full sequence is Probable chloroethene reductive dehalogenase membrane anchor protein (93 aa).

Helical transmembrane passes span 3 to 23 (AIYF…FTWF), 35 to 55 (WVLG…TYAS), and 64 to 84 (SAWI…LFAA).

Belongs to the PceB family.

The protein localises to the cell membrane. Functionally, may act as a membrane anchor for the chloroethene reductive dehalogenase VcrA. This Dehalococcoides mccartyi (strain VS) protein is Probable chloroethene reductive dehalogenase membrane anchor protein.